The chain runs to 431 residues: 3-phosphoshikimate 1-carboxyvinyltransferase (431 aa).

3-phosphoshikimate contacts are provided by lysine 22, serine 23, and arginine 27. Lysine 22 provides a ligand contact to phosphoenolpyruvate. Phosphoenolpyruvate is bound by residues glycine 94 and arginine 122. 4 residues coordinate 3-phosphoshikimate: serine 167, glutamine 169, aspartate 314, and lysine 341. Phosphoenolpyruvate is bound at residue glutamine 169. The active-site Proton acceptor is aspartate 314. 2 residues coordinate phosphoenolpyruvate: arginine 345 and arginine 391.

This sequence belongs to the EPSP synthase family. As to quaternary structure, monomer.

Its subcellular location is the cytoplasm. The enzyme catalyses 3-phosphoshikimate + phosphoenolpyruvate = 5-O-(1-carboxyvinyl)-3-phosphoshikimate + phosphate. The protein operates within metabolic intermediate biosynthesis; chorismate biosynthesis; chorismate from D-erythrose 4-phosphate and phosphoenolpyruvate: step 6/7. Functionally, catalyzes the transfer of the enolpyruvyl moiety of phosphoenolpyruvate (PEP) to the 5-hydroxyl of shikimate-3-phosphate (S3P) to produce enolpyruvyl shikimate-3-phosphate and inorganic phosphate. The polypeptide is 3-phosphoshikimate 1-carboxyvinyltransferase (Leuconostoc citreum (strain KM20)).